A 140-amino-acid polypeptide reads, in one-letter code: MGMTVIAFDFGTKSIGCAVGQSITGTAQSLPAFKAQDGIPDWADIEKCLKEWKPDMVVVGLPLNMDGTEQDLTRRARKFGHRLNGRFGVKVAWQDERLTTTQARTEIFERGGYRALKKGKVDSISACLILESWFEEHPEG.

Belongs to the YqgF nuclease family.

The protein localises to the cytoplasm. In terms of biological role, could be a nuclease involved in processing of the 5'-end of pre-16S rRNA. This Actinobacillus succinogenes (strain ATCC 55618 / DSM 22257 / CCUG 43843 / 130Z) protein is Putative pre-16S rRNA nuclease.